The sequence spans 452 residues: tRNA modification GTPase MnmE (452 aa).

Residues R21, E78, and K118 each coordinate (6S)-5-formyl-5,6,7,8-tetrahydrofolate. The TrmE-type G domain occupies G214 to G375. N224 provides a ligand contact to K(+). GTP-binding positions include N224–S229, T243–T249, and D268–G271. Residue S228 participates in Mg(2+) binding. K(+) is bound by residues T243, I245, and T248. Position 249 (T249) interacts with Mg(2+). A (6S)-5-formyl-5,6,7,8-tetrahydrofolate-binding site is contributed by K452.

Belongs to the TRAFAC class TrmE-Era-EngA-EngB-Septin-like GTPase superfamily. TrmE GTPase family. Homodimer. Heterotetramer of two MnmE and two MnmG subunits. The cofactor is K(+).

Its subcellular location is the cytoplasm. In terms of biological role, exhibits a very high intrinsic GTPase hydrolysis rate. Involved in the addition of a carboxymethylaminomethyl (cmnm) group at the wobble position (U34) of certain tRNAs, forming tRNA-cmnm(5)s(2)U34. In Actinobacillus pleuropneumoniae serotype 5b (strain L20), this protein is tRNA modification GTPase MnmE.